A 259-amino-acid polypeptide reads, in one-letter code: 5'-nucleotidase SurE (259 aa).

Residues Asp8, Asp9, Ser39, and Asn95 each contribute to the a divalent metal cation site.

The protein belongs to the SurE nucleotidase family. The cofactor is a divalent metal cation.

It is found in the cytoplasm. The catalysed reaction is a ribonucleoside 5'-phosphate + H2O = a ribonucleoside + phosphate. Nucleotidase that shows phosphatase activity on nucleoside 5'-monophosphates. This chain is 5'-nucleotidase SurE, found in Pseudothermotoga lettingae (strain ATCC BAA-301 / DSM 14385 / NBRC 107922 / TMO) (Thermotoga lettingae).